The sequence spans 496 residues: Solute carrier family 2, facilitated glucose transporter member 3 (496 aa).

Residues 1 to 10 (MGTQKVTPAL) are Cytoplasmic-facing. A helical transmembrane segment spans residues 11 to 32 (IFAITVATIGSFQFGYNTGVIN). Residues 33-64 (APEKIIKEFINKTLTDKGNAPPSEVLLTSLWS) are Extracellular-facing. A glycan (N-linked (GlcNAc...) asparagine) is linked at asparagine 43. The chain crosses the membrane as a helical span at residues 65 to 85 (LSVAIFSVGGMIGSFSVGLFV). At 86 to 90 (NRFGR) the chain is on the cytoplasmic side. A helical transmembrane segment spans residues 91–111 (RNSMLIVNLLAVTGGCFMGLC). Over 112-118 (KVAKSVE) the chain is Extracellular. Residues 119–142 (MLILGRLIIGLFCGLCTGFVPMYI) form a helical membrane-spanning segment. The Cytoplasmic portion of the chain corresponds to 143 to 153 (GEISPTALRGA). A helical membrane pass occupies residues 154–174 (FGTLNQLGIVVGILVAQIFGL). Glutamine 159 contacts D-glucose. The Extracellular portion of the chain corresponds to 175–183 (EFILGSEEL). A helical membrane pass occupies residues 184–204 (WPLLLGFTILPTILQSAALPF). The Cytoplasmic portion of the chain corresponds to 205 to 269 (CPESPRFLLI…LFRVSSYRQP (65 aa)). Residue threonine 232 is modified to Phosphothreonine. A helical transmembrane segment spans residues 270-290 (IIISIVLQLSQQLSGINAVFY). The important for selectivity against fructose stretch occupies residues 277–279 (QLS). D-glucose is bound by residues 280-281 (QQ) and asparagine 286. At 291–304 (YSTGIFKDAGVQEP) the chain is on the extracellular side. Residues 305–325 (IYATIGAGVVNTIFTVVSLFL) traverse the membrane as a helical segment. Asparagine 315 is a binding site for D-glucose. Over 326–331 (VERAGR) the chain is Cytoplasmic. A helical membrane pass occupies residues 332–352 (RTLHMIGLGGMAFCSTLMTVS). The Extracellular portion of the chain corresponds to 353–363 (LLLKDNYNGMS). A helical transmembrane segment spans residues 364 to 389 (FVCIGAILVFVAFFEIGPGPIPWFIV). D-glucose is bound by residues glutamate 378 and tryptophan 386. Over 390-399 (AELFSQGPRP) the chain is Cytoplasmic. The helical transmembrane segment at 400–420 (AAMAVAGCSNWTSNFLVGLLF) threads the bilayer. Over 421–429 (PSAAHYLGA) the chain is Extracellular. A helical transmembrane segment spans residues 430–450 (YVFIIFTGFLITFLAFTFFKV). Over 451-496 (PETRGRTFEDITRAFEGQAHGADRSGKDGVMEVNSIEPAKETTTNV) the chain is Cytoplasmic. Residues serine 475 and serine 485 each carry the phosphoserine modification. A Phosphothreonine modification is found at threonine 492.

This sequence belongs to the major facilitator superfamily. Sugar transporter (TC 2.A.1.1) family. Glucose transporter subfamily. Interacts with SMIM43; the interaction may promote SLC2A3-mediated glucose transport to meet the energy needs of mesendoderm differentiation.

Its subcellular location is the cell membrane. The protein resides in the perikaryon. It localises to the cell projection. The catalysed reaction is D-glucose(out) = D-glucose(in). It catalyses the reaction D-galactose(in) = D-galactose(out). Its activity is regulated as follows. Deoxyglucose transport is inhibited by D-glucose, D-galactose and maltose. Galactose transport is inhibited by D-glucose and maltose. Facilitative glucose transporter. Can also mediate the uptake of various other monosaccharides across the cell membrane. Mediates the uptake of glucose, 2-deoxyglucose, galactose, mannose, xylose and fucose, and probably also dehydroascorbate. Does not mediate fructose transport. Required for mesendoderm differentiation. The sequence is that of Solute carrier family 2, facilitated glucose transporter member 3 from Pongo abelii (Sumatran orangutan).